The sequence spans 327 residues: GMP reductase (327 aa).

Catalysis depends on cysteine 175, which acts as the Thioimidate intermediate. Position 204-227 (204-227 (IIADGGIRTHGDIAKSIRFGASMV)) interacts with NADP(+).

The protein belongs to the IMPDH/GMPR family. GuaC type 2 subfamily.

The catalysed reaction is IMP + NH4(+) + NADP(+) = GMP + NADPH + 2 H(+). Its function is as follows. Catalyzes the irreversible NADPH-dependent deamination of GMP to IMP. It functions in the conversion of nucleobase, nucleoside and nucleotide derivatives of G to A nucleotides, and in maintaining the intracellular balance of A and G nucleotides. In Exiguobacterium sp. (strain ATCC BAA-1283 / AT1b), this protein is GMP reductase.